We begin with the raw amino-acid sequence, 449 residues long: Elongation factor 1-alpha (449 aa).

The region spanning 5–230 (KVHINIVVIG…DQIQEPKRPS (226 aa)) is the tr-type G domain. Residues 14 to 21 (GHVDSGKS) are G1. 14 to 21 (GHVDSGKS) is a GTP binding site. Position 55 is an N6,N6-dimethyllysine (Lys-55). The tract at residues 70-74 (GITID) is G2. Position 79 is an N6,N6,N6-trimethyllysine (Lys-79). The G3 stretch occupies residues 91–94 (DAPG). GTP-binding positions include 91 to 95 (DAPGH) and 153 to 156 (NKMD). Residues 153–156 (NKMD) are G4. Lys-187 carries the N6,N6,N6-trimethyllysine modification. The tract at residues 194–196 (SGF) is G5. Lys-261 is subject to N6-methyllysine. Glu-289 bears the 5-glutamyl glycerylphosphorylethanolamine mark. Lys-306 is modified (N6,N6,N6-trimethyllysine). A 5-glutamyl glycerylphosphorylethanolamine modification is found at Glu-362. Lys-396 carries the post-translational modification N6,N6,N6-trimethyllysine.

It belongs to the TRAFAC class translation factor GTPase superfamily. Classic translation factor GTPase family. EF-Tu/EF-1A subfamily.

Its subcellular location is the cytoplasm. Its function is as follows. This protein promotes the GTP-dependent binding of aminoacyl-tRNA to the A-site of ribosomes during protein biosynthesis. The chain is Elongation factor 1-alpha (EF1) from Manihot esculenta (Cassava).